The sequence spans 339 residues: Phenylalanine--tRNA ligase alpha subunit (339 aa).

E254 contacts Mg(2+).

Belongs to the class-II aminoacyl-tRNA synthetase family. Phe-tRNA synthetase alpha subunit type 1 subfamily. Tetramer of two alpha and two beta subunits. Mg(2+) is required as a cofactor.

It is found in the cytoplasm. The catalysed reaction is tRNA(Phe) + L-phenylalanine + ATP = L-phenylalanyl-tRNA(Phe) + AMP + diphosphate + H(+). The sequence is that of Phenylalanine--tRNA ligase alpha subunit from Clostridium beijerinckii (strain ATCC 51743 / NCIMB 8052) (Clostridium acetobutylicum).